We begin with the raw amino-acid sequence, 99 residues long: MGWYCLDRDHNLILKLYIQPGARQTEAIGVHGEELKIKLAAPPMDGKANRALAVFLAKRFNVPLKHITLKWGAQSRHKVVEIYQPVNGPEVLFNEIRAE.

This sequence belongs to the UPF0235 family.

The sequence is that of UPF0235 protein Neut_2146 from Nitrosomonas eutropha (strain DSM 101675 / C91 / Nm57).